The primary structure comprises 352 residues: Photosystem II D2 protein (352 aa).

The helical transmembrane segment at 40–60 (CAYLALGGWLTGTTFVTSWYT) threads the bilayer. His-117 lines the chlorophyll a pocket. The helical transmembrane segment at 124-140 (GFMLRQFEIARLVGVRP) threads the bilayer. Residues Gln-129 and Asn-142 each contribute to the pheophytin a site. The helical transmembrane segment at 152-165 (VFVSVFLIYPLGQS) threads the bilayer. His-197 is a binding site for chlorophyll a. Residues 207–227 (GALLCAIHGATVENTLYKDGE) traverse the membrane as a helical segment. Residues His-214 and Phe-261 each coordinate a plastoquinone. His-214 serves as a coordination point for Fe cation. His-268 contributes to the Fe cation binding site. Residues 278 to 294 (GLWMSSIGVVGLALNLR) form a helical membrane-spanning segment.

The protein belongs to the reaction center PufL/M/PsbA/D family. In terms of assembly, PSII is composed of 1 copy each of membrane proteins PsbA, PsbB, PsbC, PsbD, PsbE, PsbF, PsbH, PsbI, PsbJ, PsbK, PsbL, PsbM, PsbT, PsbX, PsbY, PsbZ, Psb30/Ycf12, peripheral proteins PsbO, CyanoQ (PsbQ), PsbU, PsbV and a large number of cofactors. It forms dimeric complexes. The cofactor is The D1/D2 heterodimer binds P680, chlorophylls that are the primary electron donor of PSII, and subsequent electron acceptors. It shares a non-heme iron and each subunit binds pheophytin, quinone, additional chlorophylls, carotenoids and lipids. There is also a Cl(-1) ion associated with D1 and D2, which is required for oxygen evolution. The PSII complex binds additional chlorophylls, carotenoids and specific lipids..

The protein localises to the cellular thylakoid membrane. It catalyses the reaction 2 a plastoquinone + 4 hnu + 2 H2O = 2 a plastoquinol + O2. Functionally, photosystem II (PSII) is a light-driven water:plastoquinone oxidoreductase that uses light energy to abstract electrons from H(2)O, generating O(2) and a proton gradient subsequently used for ATP formation. It consists of a core antenna complex that captures photons, and an electron transfer chain that converts photonic excitation into a charge separation. The D1/D2 (PsbA/PsbD) reaction center heterodimer binds P680, the primary electron donor of PSII as well as several subsequent electron acceptors. D2 is needed for assembly of a stable PSII complex. This Synechococcus sp. (strain JA-3-3Ab) (Cyanobacteria bacterium Yellowstone A-Prime) protein is Photosystem II D2 protein.